The following is a 151-amino-acid chain: Transcriptional regulator MraZ (151 aa).

SpoVT-AbrB domains lie at 5 to 52 and 81 to 124; these read ANAI…PLPE and AVDL…DEDA.

Belongs to the MraZ family. In terms of assembly, forms oligomers.

Its subcellular location is the cytoplasm. It localises to the nucleoid. The sequence is that of Transcriptional regulator MraZ from Pseudomonas aeruginosa (strain LESB58).